A 479-amino-acid polypeptide reads, in one-letter code: Probable periplasmic serine endoprotease DegP-like (479 aa).

The first 27 residues, 1–27 (MSIPRMKSYFSLIAAVLMLGQVATAQA), serve as a signal peptide directing secretion. The tract at residues 77 to 99 (LERSMPPGSRPPGAGKGDRQRET) is disordered. Residues H119, D149, and S222 each act as charge relay system in the active site. Substrate contacts are provided by residues 220-222 (GNS) and 277-281 (LGVVI). 2 PDZ domains span residues 266–357 (LKAS…IRDG) and 363–468 (TVTV…LRQG).

It belongs to the peptidase S1C family.

The protein resides in the periplasm. The enzyme catalyses Acts on substrates that are at least partially unfolded. The cleavage site P1 residue is normally between a pair of hydrophobic residues, such as Val-|-Val.. In terms of biological role, might be efficient in the degradation of transiently denatured and unfolded proteins which accumulate in the periplasm following stress conditions. In Pseudomonas savastanoi pv. phaseolicola (strain 1448A / Race 6) (Pseudomonas syringae pv. phaseolicola (strain 1448A / Race 6)), this protein is Probable periplasmic serine endoprotease DegP-like (mucD).